The sequence spans 265 residues: Putative carbamate hydrolase RutD (265 aa).

The AB hydrolase-1 domain maps to 21 to 123; sequence PILLSAGMGG…TIVNGWARAD (103 aa).

It belongs to the AB hydrolase superfamily. Hydrolase RutD family.

It catalyses the reaction carbamate + 2 H(+) = NH4(+) + CO2. In terms of biological role, involved in pyrimidine catabolism. May facilitate the hydrolysis of carbamate, a reaction that can also occur spontaneously. The protein is Putative carbamate hydrolase RutD of Azorhizobium caulinodans (strain ATCC 43989 / DSM 5975 / JCM 20966 / LMG 6465 / NBRC 14845 / NCIMB 13405 / ORS 571).